Consider the following 293-residue polypeptide: DOMON domain-containing protein FRRS1L (293 aa).

The first 28 residues, methionine 1 to alanine 28, serve as a signal peptide directing secretion. Residues serine 29–aspartate 60 are disordered. The segment covering alanine 46–aspartate 60 has biased composition (basic and acidic residues). Positions cysteine 119–alanine 234 constitute a DOMON domain. The helical transmembrane segment at threonine 271–glycine 291 threads the bilayer.

In terms of assembly, component of the outer core of AMPAR complex. AMPAR complex consists of an inner core made of 4 pore-forming GluA/GRIA proteins (GRIA1, GRIA2, GRIA3 and GRIA4) and 4 major auxiliary subunits arranged in a twofold symmetry. One of the two pairs of distinct binding sites is occupied either by CNIH2, CNIH3 or CACNG2, CACNG3. The other harbors CACNG2, CACNG3, CACNG4, CACNG8 or GSG1L. This inner core of AMPAR complex is complemented by outer core constituents binding directly to the GluA/GRIA proteins at sites distinct from the interaction sites of the inner core constituents. Outer core constituents include at least PRRT1, PRRT2, CKAMP44/SHISA9, FRRS1L and NRN1. The proteins of the inner and outer core serve as a platform for other, more peripherally associated AMPAR constituents. Alone or in combination, these auxiliary subunits control the gating and pharmacology of the AMPAR complex and profoundly impact their biogenesis and protein processing. Expressed in the brain (at protein level). In embryos expression is evident in the ventral forebrain, but a lower level is seen in the remainder of the embryos. In the adult brain, expressed in the cortex, cerebellum, hippocampus and basal ganglia.

The protein resides in the cell membrane. It localises to the synapse. Important modulator of glutamate signaling pathway. This Mus musculus (Mouse) protein is DOMON domain-containing protein FRRS1L (Frrs1l).